Here is a 203-residue protein sequence, read N- to C-terminus: Small ribosomal subunit protein uS4c (203 aa).

Positions 91–159 (MRLDNIIFRL…ISKNIEFYQK (69 aa)) constitute an S4 RNA-binding domain.

Belongs to the universal ribosomal protein uS4 family. As to quaternary structure, part of the 30S ribosomal subunit. Contacts protein S5. The interaction surface between S4 and S5 is involved in control of translational fidelity.

The protein localises to the plastid. Its subcellular location is the chloroplast. Its function is as follows. One of the primary rRNA binding proteins, it binds directly to 16S rRNA where it nucleates assembly of the body of the 30S subunit. With S5 and S12 plays an important role in translational accuracy. The polypeptide is Small ribosomal subunit protein uS4c (rps4) (Lopidium concinnum (Moss)).